We begin with the raw amino-acid sequence, 377 residues long: Molybdenum import ATP-binding protein ModC (377 aa).

Residues 4–240 (IAPRSIRGEF…PALPLATARD (237 aa)) enclose the ABC transporter domain. 38-45 (GPSGCGKS) contributes to the ATP binding site. The Mop domain occupies 299–369 (RTSILNILPA…IKGVALAPER (71 aa)).

This sequence belongs to the ABC transporter superfamily. Molybdate importer (TC 3.A.1.8) family. The complex is composed of two ATP-binding proteins (ModC), two transmembrane proteins (ModB) and a solute-binding protein (ModA).

It localises to the cell inner membrane. The catalysed reaction is molybdate(out) + ATP + H2O = molybdate(in) + ADP + phosphate + H(+). Its function is as follows. Part of the ABC transporter complex ModABC involved in molybdenum import. Responsible for energy coupling to the transport system. The polypeptide is Molybdenum import ATP-binding protein ModC (Rhodopseudomonas palustris (strain HaA2)).